The sequence spans 147 residues: Hemoglobin subunit epsilon (147 aa).

Residues 3-147 (HFTAEEKATI…VATALAHKYH (145 aa)) form the Globin domain. A phosphoserine mark is found at S14 and S51. Heme b contacts are provided by H64 and H93.

It belongs to the globin family. In terms of assembly, heterotetramer of two alpha chains and two epsilon chains in early embryonic hemoglobin Gower-2; two zeta chains and two epsilon chains in early embryonic hemoglobin Gower-1. In terms of tissue distribution, red blood cells.

Functionally, the epsilon chain is a beta-type chain of early mammalian embryonic hemoglobin. In Daubentonia madagascariensis (Aye-aye), this protein is Hemoglobin subunit epsilon (HBE1).